A 313-amino-acid polypeptide reads, in one-letter code: tRNA-cytidine(32) 2-sulfurtransferase (313 aa).

The PP-loop motif signature appears at 50–55 (SGGKDS). Residues cysteine 125, cysteine 128, and cysteine 216 each contribute to the [4Fe-4S] cluster site.

It belongs to the TtcA family. Homodimer. It depends on Mg(2+) as a cofactor. [4Fe-4S] cluster serves as cofactor.

The protein localises to the cytoplasm. The enzyme catalyses cytidine(32) in tRNA + S-sulfanyl-L-cysteinyl-[cysteine desulfurase] + AH2 + ATP = 2-thiocytidine(32) in tRNA + L-cysteinyl-[cysteine desulfurase] + A + AMP + diphosphate + H(+). It participates in tRNA modification. Functionally, catalyzes the ATP-dependent 2-thiolation of cytidine in position 32 of tRNA, to form 2-thiocytidine (s(2)C32). The sulfur atoms are provided by the cysteine/cysteine desulfurase (IscS) system. The chain is tRNA-cytidine(32) 2-sulfurtransferase from Haemophilus influenzae (strain ATCC 51907 / DSM 11121 / KW20 / Rd).